A 257-amino-acid polypeptide reads, in one-letter code: Imidazole glycerol phosphate synthase subunit HisF (257 aa).

Residues D12 and D131 contribute to the active site.

This sequence belongs to the HisA/HisF family. In terms of assembly, heterodimer of HisH and HisF.

The protein localises to the cytoplasm. The catalysed reaction is 5-[(5-phospho-1-deoxy-D-ribulos-1-ylimino)methylamino]-1-(5-phospho-beta-D-ribosyl)imidazole-4-carboxamide + L-glutamine = D-erythro-1-(imidazol-4-yl)glycerol 3-phosphate + 5-amino-1-(5-phospho-beta-D-ribosyl)imidazole-4-carboxamide + L-glutamate + H(+). The protein operates within amino-acid biosynthesis; L-histidine biosynthesis; L-histidine from 5-phospho-alpha-D-ribose 1-diphosphate: step 5/9. In terms of biological role, IGPS catalyzes the conversion of PRFAR and glutamine to IGP, AICAR and glutamate. The HisF subunit catalyzes the cyclization activity that produces IGP and AICAR from PRFAR using the ammonia provided by the HisH subunit. This chain is Imidazole glycerol phosphate synthase subunit HisF, found in Marinomonas sp. (strain MWYL1).